Here is a 409-residue protein sequence, read N- to C-terminus: Serine/threonine transporter SstT (409 aa).

Helical transmembrane passes span 17–37 (LVVQIIVGLVAGLLLASFFPA), 49–69 (FVSALKAVAPVLVFVLVMASI), 83–103 (ILLLYLVGTFSAAVVAVIASF), 142–162 (ALISANFIGILAWAIGLGIAF), 180–200 (VSLIVKVVIRFAPLGIFGLVA), 218–238 (LVVLLGCMLFVAFVVNPLIVF), 299–319 (MAGAAITITVLTLAAVHTLGI), 331–351 (VVASVCACGASGVAGGSLLLI), and 357–377 (LFGIPSEVAMQVVAVGFIIAI).

The protein belongs to the dicarboxylate/amino acid:cation symporter (DAACS) (TC 2.A.23) family.

The protein resides in the cell inner membrane. The enzyme catalyses L-serine(in) + Na(+)(in) = L-serine(out) + Na(+)(out). It catalyses the reaction L-threonine(in) + Na(+)(in) = L-threonine(out) + Na(+)(out). Its function is as follows. Involved in the import of serine and threonine into the cell, with the concomitant import of sodium (symport system). This Pseudomonas paraeruginosa (strain DSM 24068 / PA7) (Pseudomonas aeruginosa (strain PA7)) protein is Serine/threonine transporter SstT.